Here is an 83-residue protein sequence, read N- to C-terminus: RNA-binding protein Hfq (83 aa).

The 60-residue stretch at 9 to 68 (DPYLNALRKERIPVSIFLVNGIKLQGQIESFDQFVILLKNTVSQMVYKHAISTVVPARNV) folds into the Sm domain.

Belongs to the Hfq family. As to quaternary structure, homohexamer.

In terms of biological role, RNA chaperone that binds small regulatory RNA (sRNAs) and mRNAs to facilitate mRNA translational regulation in response to envelope stress, environmental stress and changes in metabolite concentrations. Also binds with high specificity to tRNAs. The protein is RNA-binding protein Hfq of Marinobacter nauticus (strain ATCC 700491 / DSM 11845 / VT8) (Marinobacter aquaeolei).